The sequence spans 170 residues: Acireductone dioxygenase (170 aa).

Fe(2+) is bound by residues H99, H101, E105, and H144. The Ni(2+) site is built by H99, H101, E105, and H144.

The protein belongs to the acireductone dioxygenase (ARD) family. Monomer. It depends on Fe(2+) as a cofactor. The cofactor is Ni(2+).

It catalyses the reaction 1,2-dihydroxy-5-(methylsulfanyl)pent-1-en-3-one + O2 = 3-(methylsulfanyl)propanoate + CO + formate + 2 H(+). The enzyme catalyses 1,2-dihydroxy-5-(methylsulfanyl)pent-1-en-3-one + O2 = 4-methylsulfanyl-2-oxobutanoate + formate + 2 H(+). It participates in amino-acid biosynthesis; L-methionine biosynthesis via salvage pathway; L-methionine from S-methyl-5-thio-alpha-D-ribose 1-phosphate: step 5/6. Its function is as follows. Catalyzes 2 different reactions between oxygen and the acireductone 1,2-dihydroxy-3-keto-5-methylthiopentene (DHK-MTPene) depending upon the metal bound in the active site. Fe-containing acireductone dioxygenase (Fe-ARD) produces formate and 2-keto-4-methylthiobutyrate (KMTB), the alpha-ketoacid precursor of methionine in the methionine recycle pathway. Ni-containing acireductone dioxygenase (Ni-ARD) produces methylthiopropionate, carbon monoxide and formate, and does not lie on the methionine recycle pathway. The protein is Acireductone dioxygenase of Bacillus thuringiensis subsp. konkukian (strain 97-27).